Reading from the N-terminus, the 1166-residue chain is Serine-aspartate repeat-containing protein E (1166 aa).

An N-terminal signal peptide occupies residues methionine 1 to alanine 52. The short motif at phenylalanine 23–serine 34 is the YSIRK-G/S signaling motif element. The interval alanine 53–lysine 606 is ligand binding A region. Residues glutamate 54 to proline 253 form a disordered region. Residues alanine 61–valine 75 are compositionally biased toward basic and acidic residues. Residues glutamate 77–asparagine 90 are compositionally biased toward low complexity. Basic and acidic residues predominate over residues isoleucine 92–serine 108. Over residues asparagine 118–glutamine 129 the composition is skewed to polar residues. The segment covering asparagine 130–threonine 145 has biased composition (basic and acidic residues). Residues threonine 166–glutamate 178 show a composition bias toward low complexity. Residues isoleucine 179–threonine 212 are compositionally biased toward polar residues. Positions serine 221 to threonine 246 are enriched in basic and acidic residues. CNA-B domains lie at leucine 607–proline 719, lysine 720–proline 829, and lysine 830–threonine 940. Positions valine 904–asparagine 1141 are disordered. Acidic residues-rich tracts occupy residues threonine 908 to glutamate 918 and tyrosine 935 to serine 1105. The short motif at leucine 1129–glycine 1133 is the LPXTG sorting signal element. At threonine 1132 the chain carries Pentaglycyl murein peptidoglycan amidated threonine. A propeptide spans glycine 1133–lysine 1166 (removed by sortase).

This sequence belongs to the serine-aspartate repeat-containing protein (SDr) family. In terms of assembly, interacts with host complement factor H/CFAH (via C-terminus). Interacts with host complement regulator C4BPA.

Its subcellular location is the secreted. It localises to the cell wall. In terms of biological role, cell surface-associated calcium-binding protein which plays an important role in adhesion and pathogenesis. Contributes to the resistance to killing by innate immune components in blood and thus attenuates bacterial clearance by interacting with host complement factor H/CFAH and modulating its activity. Also inhibits bacterial opsonization and killing by interacting with host complement regulator C4BPA and thus inhibiting classical complement pathway activation. The polypeptide is Serine-aspartate repeat-containing protein E (sdrE) (Staphylococcus aureus (strain COL)).